A 677-amino-acid chain; its full sequence is WD repeat-containing protein 43 (677 aa).

WD repeat units lie at residues 11-51, 57-119, 124-163, 166-205, 207-259, and 267-309; these read PLAP…LHQE, HLSG…LHSK, GHDNRVNCIQWHQDSGCLYSCSDDKHIVEWNVQTCKVKCK, GDNSSVSSLCISPDGKMLLSAGRTIKLWVLETKEVYRHFT, HATP…KEKS, and TDEP…YCKK. Phosphoserine is present on S77. A Glycyl lysine isopeptide (Lys-Gly) (interchain with G-Cter in SUMO1); alternate cross-link involves residue K309. K309 participates in a covalent cross-link: Glycyl lysine isopeptide (Lys-Gly) (interchain with G-Cter in SUMO2); alternate. At T321 the chain carries Phosphothreonine. A Glycyl lysine isopeptide (Lys-Gly) (interchain with G-Cter in SUMO1); alternate cross-link involves residue K384. K384 is covalently cross-linked (Glycyl lysine isopeptide (Lys-Gly) (interchain with G-Cter in SUMO2); alternate). Position 394 is a phosphothreonine (T394). Residues S399, S431, S437, and S590 each carry the phosphoserine modification. 2 disordered regions span residues 414–445 and 582–677; these read AIKPAPPQTEQVESKRKSGGNEVSIEERLGAM and SEKT…SEEE. Residues 582–592 show a composition bias toward polar residues; the sequence is SEKTKGATSPG. Acidic residues predominate over residues 600-652; the sequence is EEESSEEESDDEIADKDSEDNWDEDEEESESEKDEDVEEEDEDAEGKDEENGE. Residues 653–663 are compositionally biased toward basic and acidic residues; sequence DRDTASEKELN. T656 bears the Phosphothreonine mark. Residue S658 is modified to Phosphoserine. Residues 664-677 show a composition bias toward acidic residues; that stretch reads GDSDLDPENESEEE.

It belongs to the UTP5 family. Part of the small subunit (SSU) processome, composed of more than 70 proteins and the RNA chaperone small nucleolar RNA (snoRNA) U3. May be a component of the proposed t-UTP subcomplex of the ribosomal small subunit (SSU) processome containing at least UTP4, WDR43, HEATR1, UTP15, WDR75. Binds to RNA; binding is required for its chromatin association. Interacts with CDK9, DDX21 and SUPT6H. Interacts with RNA polymerase II. Interacts directly with UTP4 and UTP15.

The protein resides in the nucleus. It is found in the nucleolus. Its subcellular location is the nucleolus fibrillar center. It localises to the nucleoplasm. Its function is as follows. Ribosome biogenesis factor that coordinates hyperactive transcription and ribogenesis. Part of the small subunit (SSU) processome, first precursor of the small eukaryotic ribosomal subunit. During the assembly of the SSU processome in the nucleolus, many ribosome biogenesis factors, an RNA chaperone and ribosomal proteins associate with the nascent pre-rRNA and work in concert to generate RNA folding, modifications, rearrangements and cleavage as well as targeted degradation of pre-ribosomal RNA by the RNA exosome. Involved in nucleolar processing of pre-18S ribosomal RNA. Required for optimal pre-ribosomal RNA transcription by RNA polymerase I. Essential for stem cell pluripotency and embryonic development. In the nucleoplasm, recruited by promoter-associated/nascent transcripts and transcription to active promoters where it facilitates releases of elongation factor P-TEFb and paused RNA polymerase II to allow transcription elongation and maintain high-level expression of its targets genes. The polypeptide is WD repeat-containing protein 43 (Homo sapiens (Human)).